The sequence spans 280 residues: Nocamycin O-methyltransferase (280 aa).

This sequence belongs to the methyltransferase superfamily.

It carries out the reaction nocamycin E + S-adenosyl-L-methionine = nocamycin I + S-adenosyl-L-homocysteine. It functions in the pathway antibiotic biosynthesis. Involved in the biosynthesis of nocamycin I and nocamycin II. Catalyzes the methylation of nocamycin E to yield nocamycin I. The protein is Nocamycin O-methyltransferase of Saccharothrix syringae (Nocardiopsis syringae).